The following is a 763-amino-acid chain: Ribonucleoside-diphosphate reductase subunit alpha (763 aa).

One can recognise an ATP-cone domain in the interval 5–95 (LFVTKRNGKK…IFHLRKKAYG (91 aa)). ATP contacts are provided by residues Lys-9, 15–21 (EKINLDK), Thr-55, and Lys-91. Thr-209 contacts GDP. Cys-225 and Cys-462 are disulfide-bonded. Residues 232 to 234 (DNL), Arg-262, and Arg-269 contribute to the dTTP site. Asn-437 contacts GDP. Asn-437 functions as the Proton acceptor in the catalytic mechanism. Catalysis depends on Cys-439, which acts as the Cysteine radical intermediate. GDP contacts are provided by residues Glu-441 and 623-625 (ETS). Glu-441 (proton acceptor) is an active-site residue.

Belongs to the ribonucleoside diphosphate reductase large chain family. In terms of assembly, tetramer of two alpha and two beta subunits.

It catalyses the reaction a 2'-deoxyribonucleoside 5'-diphosphate + [thioredoxin]-disulfide + H2O = a ribonucleoside 5'-diphosphate + [thioredoxin]-dithiol. With respect to regulation, under complex allosteric control mediated by deoxynucleoside triphosphates and ATP binding to separate specificity and activation sites on the alpha subunit. The type of nucleotide bound at the specificity site determines substrate preference. It seems probable that ATP makes the enzyme reduce CDP and UDP, dGTP favors ADP reduction and dTTP favors GDP reduction. Stimulated by ATP and inhibited by dATP binding to the activity site. Its function is as follows. Provides the precursors necessary for DNA synthesis. Catalyzes the biosynthesis of deoxyribonucleotides from the corresponding ribonucleotides. The chain is Ribonucleoside-diphosphate reductase subunit alpha (nrdA) from Buchnera aphidicola subsp. Schizaphis graminum (strain Sg).